A 186-amino-acid chain; its full sequence is Dehydrin Rab18 (186 aa).

The disordered stretch occupies residues 1–186 (MASYQNRPGG…IKEKLPGGGR (186 aa)). Residues 30-85 (PMGGGGYGTGGGGGATGGQGYGTGGQGYGSGGQGYGTGGQGYGTGTGTEGFGTGGG) show a composition bias toward gly residues. Positions 89 to 98 (HGQEQLHKES) are enriched in basic and acidic residues. A compositionally biased stretch (low complexity) spans 105–116 (MLHRSGSGSSSS). Over residues 133 to 144 (KIKEKLPGHHDQ) the composition is skewed to basic and acidic residues. Residues 152-164 (GGMGSGYDAGGYG) show a composition bias toward gly residues. The span at 165–186 (GEHHEKKGMMDKIKEKLPGGGR) shows a compositional bias: basic and acidic residues.

The protein belongs to the plant dehydrin family.

This is Dehydrin Rab18 (RAB18) from Arabidopsis thaliana (Mouse-ear cress).